A 491-amino-acid polypeptide reads, in one-letter code: MANYFNTLNLRQQLAQLGKCRFMARDEFADGASYLQGKKVVIVGCGAQGLNQGLNMRDSGLDISYALRKEAIAEKRASWRKATENGFKVGTYEELVPQADLVVNLTPDKQHSDVVRSVQPLMKDGAALGYSHGFNIVEVGEQIRKDITVVMVAPKCPGTEVREEYKRGFGVPTLIAVHPENDPKGEGMAIAKAWAAATGGHRAGVLESSFVAEVKSDLMGEQTILCGMLQAGSLLCFDKLVEEGTDPAYAEKLIQFGWETITEALKQGGITLMMDRLSNPAKLRAYALSEQLKEIMAPLFQKHMDDIISGEFSSGMMSDWANDDKNLLTWREETGKTAFETASQFDGKISEQEYFDKGVLMIAMVKAGVELAFETMVDSGIIEESAYYESLHELPLIANTIARKRLYEMNVVISDTAEYGNYLFSYACVPLLKEFMTTLQTGDLGKAVAEGAVDNAQLRDVNEAIRSHAIESVGHTLRGYMKDMKRIAVAG.

Residues 15–208 form the KARI N-terminal Rossmann domain; that stretch reads AQLGKCRFMA…GGHRAGVLES (194 aa). NADP(+)-binding positions include 45-48, arginine 68, arginine 76, serine 78, and 108-110; these read CGAQ and DKQ. Histidine 132 is a catalytic residue. An NADP(+)-binding site is contributed by glycine 158. KARI C-terminal knotted domains follow at residues 209 to 344 and 345 to 484; these read SFVA…TASQ and FDGK…MKDM. Residues aspartate 217, glutamate 221, glutamate 389, and glutamate 393 each coordinate Mg(2+). Serine 414 is a binding site for substrate.

This sequence belongs to the ketol-acid reductoisomerase family. The cofactor is Mg(2+).

It catalyses the reaction (2R)-2,3-dihydroxy-3-methylbutanoate + NADP(+) = (2S)-2-acetolactate + NADPH + H(+). The catalysed reaction is (2R,3R)-2,3-dihydroxy-3-methylpentanoate + NADP(+) = (S)-2-ethyl-2-hydroxy-3-oxobutanoate + NADPH + H(+). The protein operates within amino-acid biosynthesis; L-isoleucine biosynthesis; L-isoleucine from 2-oxobutanoate: step 2/4. It participates in amino-acid biosynthesis; L-valine biosynthesis; L-valine from pyruvate: step 2/4. In terms of biological role, involved in the biosynthesis of branched-chain amino acids (BCAA). Catalyzes an alkyl-migration followed by a ketol-acid reduction of (S)-2-acetolactate (S2AL) to yield (R)-2,3-dihydroxy-isovalerate. In the isomerase reaction, S2AL is rearranged via a Mg-dependent methyl migration to produce 3-hydroxy-3-methyl-2-ketobutyrate (HMKB). In the reductase reaction, this 2-ketoacid undergoes a metal-dependent reduction by NADPH to yield (R)-2,3-dihydroxy-isovalerate. This is Ketol-acid reductoisomerase (NADP(+)) from Enterobacter sp. (strain 638).